The primary structure comprises 540 residues: Probable feruloyl esterase B-1 (540 aa).

The signal sequence occupies residues 1–18 (MLVMQLLLPFLASTAAAA). 6 N-linked (GlcNAc...) asparagine glycosylation sites follow: Asn28, Asn49, Asn66, Asn95, Asn113, and Asn195. Disulfide bonds link Cys41-Cys90 and Cys76-Cys129. 3 disulfide bridges follow: Cys202/Cys458, Cys271/Cys288, and Cys297/Cys308. Catalysis depends on Ser203, which acts as the Acyl-ester intermediate. The N-linked (GlcNAc...) asparagine glycan is linked to Asn234. Positions 272, 275, 277, 279, and 281 each coordinate Ca(2+). N-linked (GlcNAc...) asparagine glycosylation is found at Asn298, Asn328, and Asn367. Catalysis depends on charge relay system residues Asp417 and His457. Asn506 carries an N-linked (GlcNAc...) asparagine glycan. Cys517 and Cys539 are joined by a disulfide.

Belongs to the tannase family. As to quaternary structure, homodimer.

The protein localises to the secreted. It catalyses the reaction feruloyl-polysaccharide + H2O = ferulate + polysaccharide.. In terms of biological role, involved in degradation of plant cell walls. Hydrolyzes the feruloyl-arabinose ester bond in arabinoxylans as well as the feruloyl-galactose and feruloyl-arabinose ester bonds in pectin. In Aspergillus oryzae (strain ATCC 42149 / RIB 40) (Yellow koji mold), this protein is Probable feruloyl esterase B-1 (faeB-1).